Here is a 123-residue protein sequence, read N- to C-terminus: S-adenosylmethionine decarboxylase proenzyme 2 (123 aa).

S65 (schiff-base intermediate with substrate; via pyruvic acid) is an active-site residue. S65 carries the pyruvic acid (Ser); by autocatalysis modification. Residue H70 is the Proton acceptor; for processing activity of the active site. C85 acts as the Proton donor; for catalytic activity in catalysis.

It belongs to the prokaryotic AdoMetDC family. Type 1 subfamily. In terms of assembly, heterotetramer of two alpha and two beta chains arranged as a dimer of alpha/beta heterodimers. Pyruvate serves as cofactor. Is synthesized initially as an inactive proenzyme. Formation of the active enzyme involves a self-maturation process in which the active site pyruvoyl group is generated from an internal serine residue via an autocatalytic post-translational modification. Two non-identical subunits are generated from the proenzyme in this reaction, and the pyruvate is formed at the N-terminus of the alpha chain, which is derived from the carboxyl end of the proenzyme. The post-translation cleavage follows an unusual pathway, termed non-hydrolytic serinolysis, in which the side chain hydroxyl group of the serine supplies its oxygen atom to form the C-terminus of the beta chain, while the remainder of the serine residue undergoes an oxidative deamination to produce ammonia and the pyruvoyl group blocking the N-terminus of the alpha chain.

The enzyme catalyses S-adenosyl-L-methionine + H(+) = S-adenosyl 3-(methylsulfanyl)propylamine + CO2. The protein operates within amine and polyamine biosynthesis; S-adenosylmethioninamine biosynthesis; S-adenosylmethioninamine from S-adenosyl-L-methionine: step 1/1. Its function is as follows. Catalyzes the decarboxylation of S-adenosylmethionine to S-adenosylmethioninamine (dcAdoMet), the propylamine donor required for the synthesis of the polyamines spermine and spermidine from the diamine putrescine. This chain is S-adenosylmethionine decarboxylase proenzyme 2, found in Bacillus cereus (strain ZK / E33L).